Here is a 966-residue protein sequence, read N- to C-terminus: Polycystin-2 (966 aa).

The interval 1-106 (MVNSRRVQPQ…DDDEVEGEEG (106 aa)) is disordered. Residues 1-217 (MVNSRRVQPQ…NANREKYLKS (217 aa)) lie on the Cytoplasmic side of the membrane. The span at 30–44 (VAGGAGLAVPGGLGE) shows a compositional bias: gly residues. Over residues 46–56 (RGLEIEMERIR) the composition is skewed to basic and acidic residues. A compositionally biased stretch (low complexity) spans 58–79 (AAARDPPAGASASPSPPLSSCS). 2 positions are modified to phosphoserine: Ser-72 and Ser-76. Acidic residues predominate over residues 91 to 105 (EAEEDDDDDEVEGEE). Arg-135 carries the omega-N-methylarginine modification. The disordered stretch occupies residues 147-179 (HLSGRRRRLEDQGAQCPSPAGGGDPLHRHLPLE). The chain crosses the membrane as a helical span at residues 218–239 (VLRELVTYLFFLVVLCILTYGM). The Extracellular portion of the chain corresponds to 240–466 (MSSNVYYYTR…PVKLIRYVTA (227 aa)). Asn-297, Asn-303, and Asn-326 each carry an N-linked (GlcNAc...) asparagine glycan. A disulfide bridge links Cys-329 with Cys-342. 2 N-linked (GlcNAc...) asparagine glycosylation sites follow: Asn-360 and Asn-373. The helical transmembrane segment at 467–487 (FDFFLAACEIIFCFFIIYYVV) threads the bilayer. At 488 to 503 (EEILEIRIHRLSYFRS) the chain is on the cytoplasmic side. Residues 504 to 524 (FWNCLDVVIVVLSVVAMVINI) form a helical membrane-spanning segment. Residues 525–550 (YRMSNAEGLLQFLEDQNSFPNFEHVA) are Extracellular-facing. Residues 551-571 (YWQIQFNNISAVMVFLVWIKL) traverse the membrane as a helical segment. Gln-555 serves as a coordination point for cholesterol. At 572–595 (FKFINFNRTMSQLSTTMSRCAKDL) the chain is on the cytoplasmic side. A helical transmembrane segment spans residues 596 to 617 (FGFTIMFSIIFLAYAQLAYLVF). Over 618 to 629 (GTQVDDFSTFQE) the chain is Extracellular. The segment at residues 630–644 (CIFTQFRIILGDINF) is an intramembrane region (pore-forming). Residue Leu-639 coordinates Ca(2+). Positions 639–641 (LGD) match the Selectivity filter motif. Residues 645–652 (AEIEEANR) are Extracellular-facing. The chain crosses the membrane as a helical span at residues 653 to 673 (VLGPLYFTTFVFFMFFILLNM). Residues 674–966 (FLAIINDSYS…GGNGSANVHA (293 aa)) are Cytoplasmic-facing. One can recognise an EF-hand domain in the interval 748 to 783 (HTDAEIEAIFTKYDQDGDQELTEREHQQMRDDLEKE). Positions 761, 763, 765, 767, and 772 each coordinate Ca(2+). The segment at 764–828 (GDQELTEREH…GHSSRRRGSI (65 aa)) is disordered. Over residues 768–793 (LTEREHQQMRDDLEKEREDLDLEHSS) the composition is skewed to basic and acidic residues. Residues 794-805 (LPRPMSSRSFPR) are compositionally biased toward low complexity. Residues Ser-799, Ser-806, Ser-810, and Ser-827 each carry the phosphoserine modification. The tract at residues 801–820 (RSFPRSLDDSEEEDDEDSGH) is linker. The important for interaction with PACS1 and PACS2 stretch occupies residues 808–819 (DDSEEEDDEDSG). Residues 831 to 870 (GVSYEEFQVLVRRVDRMEHSIGSIVSKIDAVIVKLEIMER) are a coiled coil. Residues 914-966 (WESDDAASQTGHGVSTQVGLGGQPHPRNPRPPSSQSAEGLEGGGGNGSANVHA) are disordered. The span at 919-931 (AASQTGHGVSTQV) shows a compositional bias: polar residues.

The protein belongs to the polycystin family. In terms of assembly, homotetramer. Component of the heterotetrameric polycystin channel complex with PKD1; the tetramer contains one PKD1 chain and three PKD2 chains. Interaction with PKD1 is required for ciliary localization. Isoform 1 interacts with PKD1 while isoform 3 does not. Interacts with PKD1L1. Interacts with CD2AP. Interacts with HAX1. Interacts with NEK8. Part of a complex containing AKAP5, ADCY5, ADCY6 and PDE4C. Interacts (via C-terminus) with TRPV4 (via C-terminus). Interacts (via C-terminal acidic region) with PACS1 and PACS2; these interactions retain the protein in the endoplasmic reticulum and prevent trafficking to the cell membrane. Interacts with TMEM33; enhancing its opening at the ER membrane. Interacts with TMEM120A; TMEM120A inhibits PKD2 channel activity through the physical association of PKD2 with TMEM120A. Interacts (via N-terminus) with RYR2; regulates RYR2 channel activity. In terms of processing, N-glycosylated. The four subunits in a tetramer probably differ in the extent of glycosylation; simultaneous glycosylation of all experimentally validated sites would probably create steric hindrance. Sumoylated by SUMO1; sumoylation regulates PKD2 membrane recycling and is necessary for intravascular pressure-induced arterial contractility. Post-translationally, phosphorylated. Phosphorylation is important for protein function; a mutant that lacks the N-terminal phosphorylation sites cannot complement a zebrafish pkd2-deficient mutant. PKD-mediated phosphorylation at the C-terminus regulates its function in the release of Ca(2+) stores from the endoplasmic reticulum. Phosphorylation at Ser-810 regulates PKD2 trafficking. Phosphorylation at Ser-72 is required for PKD2 trafficking to or retention at the lateral plasma membrane. Phosphorylation at Ser-799, Ser-810 and Ser-827 regulates PKD2 channel activity. In terms of tissue distribution, detected in kidney epithelium (at protein level). Highly expressed on basolateral membranes in distal convoluted tubules and medullary thick ascending limbs of Henle. Detected at much lower levels in cortical and medullary collecting tubules, and not detected in the glomerular tuft, in thin limbs of Henle, interstitium and blood vessels (at protein level). Expressed in mesenchymally derived structures in the developing embryo at day 12.5. Isoform 1 is predominantly expressed in kidney at all developmental stages with high levels also detected in lung. Isoform 3 shows highest expression in brain with lower expression in kidney and lung, low levels in thymus and is hardly detectable in liver.

It is found in the cell projection. It localises to the cilium membrane. The protein localises to the cell membrane. Its subcellular location is the basolateral cell membrane. The protein resides in the cytoplasmic vesicle membrane. It is found in the endoplasmic reticulum membrane. It localises to the golgi apparatus. The protein localises to the vesicle. Its subcellular location is the secreted. The protein resides in the extracellular exosome. It catalyses the reaction K(+)(in) = K(+)(out). The enzyme catalyses Na(+)(in) = Na(+)(out). It carries out the reaction Ca(2+)(in) = Ca(2+)(out). Channel activity is regulated by phosphorylation. The channel is activated by increased cytoplasmic Ca(2+) (in the uM range) and by membrane depolarization. TMEM120A inhibits the channel activity of PKD2, and mediates mechanosensitivity of the PKD2-TMEM120A channel complex. At the endoplasmic reticulum membrane (ER), TMEM33 enhances its channel activity. PKD1/ PKD2 complex on the plasma membrane is activated by PKD1 N-terminus. Functionally, forms a nonselective cation channel. Can function as a homotetrameric ion channel or can form heteromer with PKD1. Displays distinct function depending on its subcellular localization and regulation by its binding partners. Functions as a cation channel, with a preference for monovalent cations over divalent cations that allows K(+), Na(+) and Ca(2+) influx, with low selectivity for Ca(2+). Involved in fluid-flow mechanosensation by the primary cilium in renal epithelium. In the endoplasmic reticulum, likely functions as a K(+) channel to facilitate Ca(2+) release. The heterotetrameric PKD1/PKD2 channel has higher Ca(2+) permeability than homomeric PKD2 channel and acts as a primarily Ca(2+)-permeable channel. PKD1 and PKD2 may function through a common signaling pathway that is necessary to maintain the normal, differentiated state of renal tubule cells. Interacts with and acts as a regulator of a number of other channels, such as TRPV4, TRPC1, IP3R, RYR2, ultimately further affecting intracellular signaling, to modulate intracellular Ca(2+) signaling. Together with TRPV4, forms mechano- and thermosensitive channels in cilium. In cardiomyocytes, PKD2 modulates Ca(2+) release from stimulated RYR2 receptors through direct association. Also involved in left-right axis specification via its role in sensing nodal flow; forms a complex with PKD1L1 in cilia to facilitate flow detection in left-right patterning. Acts as a regulator of cilium length together with PKD1. Mediates systemic blood pressure and contributes to the myogenic response in cerebral arteries though vasoconstriction. This chain is Polycystin-2, found in Mus musculus (Mouse).